The chain runs to 291 residues: ATP synthase gamma chain (291 aa).

Belongs to the ATPase gamma chain family. F-type ATPases have 2 components, CF(1) - the catalytic core - and CF(0) - the membrane proton channel. CF(1) has five subunits: alpha(3), beta(3), gamma(1), delta(1), epsilon(1). CF(0) has three main subunits: a, b and c.

The protein resides in the cell inner membrane. In terms of biological role, produces ATP from ADP in the presence of a proton gradient across the membrane. The gamma chain is believed to be important in regulating ATPase activity and the flow of protons through the CF(0) complex. The polypeptide is ATP synthase gamma chain (Sphingopyxis alaskensis (strain DSM 13593 / LMG 18877 / RB2256) (Sphingomonas alaskensis)).